The primary structure comprises 115 residues: MHILDQVDAASLKQDIPAFRAGDTVKVHVNIIEGSRSRVQVFQGVVIARSGEGVRETFTVRKISFQVGVERMFPVHSPVIDKIEVVTRGDVRRAKLYYLRELRGKKAKIKEKRDN.

This sequence belongs to the bacterial ribosomal protein bL19 family.

This protein is located at the 30S-50S ribosomal subunit interface and may play a role in the structure and function of the aminoacyl-tRNA binding site. The sequence is that of Large ribosomal subunit protein bL19 from Leifsonia xyli subsp. xyli (strain CTCB07).